The sequence spans 270 residues: MPELPEVETTRRGIAPHLEGQRVSRVVVRDRRLRWPIPEDLDVRLSGQRILSVERRAKYLLINAEVGTLISHLGMSGNLRLVQLGLPAAKHEHVDIELESGLMLRYTDPRRFGAMLWSLDPLNHELLLRLGPEPLTDLFDGERLFQLSRGRTMAVKPFIMDNAVVVGVGNIYATEALFAAGIDPRREAGGISRTRYLKLAIEIKRVLAAAIEQGGTTLRDFIGGDGQPGYFQQELFVYGRGGMPCKLCGTTLREAKLGQRASVYCPRCQR.

Pro2 acts as the Schiff-base intermediate with DNA in catalysis. The Proton donor role is filled by Glu3. Lys58 functions as the Proton donor; for beta-elimination activity in the catalytic mechanism. The DNA site is built by His91, Arg110, and Arg151. Residues 236–270 (FVYGRGGMPCKLCGTTLREAKLGQRASVYCPRCQR) form an FPG-type zinc finger. Arg260 acts as the Proton donor; for delta-elimination activity in catalysis.

It belongs to the FPG family. Monomer. Zn(2+) serves as cofactor.

It carries out the reaction Hydrolysis of DNA containing ring-opened 7-methylguanine residues, releasing 2,6-diamino-4-hydroxy-5-(N-methyl)formamidopyrimidine.. The enzyme catalyses 2'-deoxyribonucleotide-(2'-deoxyribose 5'-phosphate)-2'-deoxyribonucleotide-DNA = a 3'-end 2'-deoxyribonucleotide-(2,3-dehydro-2,3-deoxyribose 5'-phosphate)-DNA + a 5'-end 5'-phospho-2'-deoxyribonucleoside-DNA + H(+). Functionally, involved in base excision repair of DNA damaged by oxidation or by mutagenic agents. Acts as a DNA glycosylase that recognizes and removes damaged bases. Has a preference for oxidized purines, such as 7,8-dihydro-8-oxoguanine (8-oxoG). Has AP (apurinic/apyrimidinic) lyase activity and introduces nicks in the DNA strand. Cleaves the DNA backbone by beta-delta elimination to generate a single-strand break at the site of the removed base with both 3'- and 5'-phosphates. The sequence is that of Formamidopyrimidine-DNA glycosylase from Pseudomonas putida (strain W619).